A 554-amino-acid polypeptide reads, in one-letter code: MAYYRTPHDVTALPAWQALQKHRDAMQSFSMREAFAADAKRFDQFSLSACGLFLDYSKNLITEQSRDLLVNLANEVGLQDAIKSMFSGEIINASEGRPVLHTALRRPVGDKLSVNGVNVMPEVHKVLNQITELVGRIHDGLWRGYSEKPITDVVNIGIGGSFLGPELVSEALLPYAQRGVRCHYLANIDGSEFHELSANLRAETTLFIVSSKSFNTLETLKNAMAARTWYLAQGGSEAELYRHFIAVSSNKAAAVAFGIREENIFPMWDWVGGRYSLWSAIGLPIALAIGTANFKELLSGAYTMDQHFQTAPFDKNMPVLLALLGVWYGNFWDANSHAILPYDHYLRNITKHLQQLDMESNGKSVLQDGTPVKTDTGPVIWGGVGCNGQHAYHQLLHQGTQLIPADFIVPVVSFNPVADHHQWLYANCLSQSQALMLGKTREEAEAELRAKGLNEADIEKLAPHKVIPGNRPSNTLVVERISPRRLGALVAMYEHKVFVQSVIWGINAFDQWGVELGKELGKGVYQRLVGSLEDSAEDGSTQGLINYFRGRHRG.

E359 (proton donor) is an active-site residue. Residues H390 and K518 contribute to the active site.

Belongs to the GPI family.

The protein resides in the cytoplasm. The catalysed reaction is alpha-D-glucose 6-phosphate = beta-D-fructose 6-phosphate. It functions in the pathway carbohydrate biosynthesis; gluconeogenesis. The protein operates within carbohydrate degradation; glycolysis; D-glyceraldehyde 3-phosphate and glycerone phosphate from D-glucose: step 2/4. In terms of biological role, catalyzes the reversible isomerization of glucose-6-phosphate to fructose-6-phosphate. The chain is Glucose-6-phosphate isomerase 2 from Pseudomonas putida (strain ATCC 47054 / DSM 6125 / CFBP 8728 / NCIMB 11950 / KT2440).